Consider the following 282-residue polypeptide: Phosphate import ATP-binding protein PstB (282 aa).

Residues 1 to 10 (MNMAESHLDP) show a composition bias toward basic and acidic residues. Positions 1–24 (MNMAESHLDPSKLATGPAGAGAAT) are disordered. Positions 14–24 (ATGPAGAGAAT) are enriched in low complexity. Residues 36–277 (IEVKNLNFFY…PARKETEDYI (242 aa)) enclose the ABC transporter domain. ATP is bound at residue 68 to 75 (GPSGCGKS).

It belongs to the ABC transporter superfamily. Phosphate importer (TC 3.A.1.7) family. As to quaternary structure, the complex is composed of two ATP-binding proteins (PstB), two transmembrane proteins (PstC and PstA) and a solute-binding protein (PstS).

The protein resides in the cell inner membrane. The catalysed reaction is phosphate(out) + ATP + H2O = ADP + 2 phosphate(in) + H(+). Its function is as follows. Part of the ABC transporter complex PstSACB involved in phosphate import. Responsible for energy coupling to the transport system. The protein is Phosphate import ATP-binding protein PstB of Burkholderia thailandensis (strain ATCC 700388 / DSM 13276 / CCUG 48851 / CIP 106301 / E264).